Here is a 452-residue protein sequence, read N- to C-terminus: 23S rRNA (uracil(1939)-C(5))-methyltransferase RlmD (452 aa).

Residues 1 to 57 enclose the TRAM domain; that stretch reads METEVNVAEISALDYEGRGVTKVGGKTVFIKGALPSERVGFRIVRQKKQFDEAEAVA. [4Fe-4S] cluster is bound by residues Cys70, Cys76, Cys79, and Cys157. The S-adenosyl-L-methionine site is built by Gln269, Phe298, Asn303, Glu319, Asn347, and Asp368. The active-site Nucleophile is Cys395.

Belongs to the class I-like SAM-binding methyltransferase superfamily. RNA M5U methyltransferase family. RlmD subfamily.

The enzyme catalyses uridine(1939) in 23S rRNA + S-adenosyl-L-methionine = 5-methyluridine(1939) in 23S rRNA + S-adenosyl-L-homocysteine + H(+). Functionally, catalyzes the formation of 5-methyl-uridine at position 1939 (m5U1939) in 23S rRNA. This is 23S rRNA (uracil(1939)-C(5))-methyltransferase RlmD from Neisseria lactamica (strain 020-06).